A 350-amino-acid chain; its full sequence is RING finger protein 44 (350 aa).

An RING-type; atypical zinc finger spans residues 298-339 (CVVCFSDFEVRQLLRVLPCNHEFHAKCVDKWLKANRTCPICR).

The chain is RING finger protein 44 (Rnf44) from Rattus norvegicus (Rat).